The chain runs to 277 residues: F420-dependent methylenetetrahydromethanopterin dehydrogenase (277 aa).

The tract at residues 249-277 is disordered; it reads EKATDSVSRKPHGADGKRLNKTKLMEKPE.

Belongs to the MTD family.

It catalyses the reaction 5,10-methylenetetrahydromethanopterin + oxidized coenzyme F420-(gamma-L-Glu)(n) + 2 H(+) = 5,10-methenyl-5,6,7,8-tetrahydromethanopterin + reduced coenzyme F420-(gamma-L-Glu)(n). The protein operates within one-carbon metabolism; methanogenesis from CO(2); 5,10-methylene-5,6,7,8-tetrahydromethanopterin from 5,10-methenyl-5,6,7,8-tetrahydromethanopterin (coenzyme F420 route): step 1/1. In terms of biological role, catalyzes the reversible reduction of methenyl-H(4)MPT(+) to methylene-H(4)MPT. In Methanococcus aeolicus (strain ATCC BAA-1280 / DSM 17508 / OCM 812 / Nankai-3), this protein is F420-dependent methylenetetrahydromethanopterin dehydrogenase.